The following is a 578-amino-acid chain: MTEDNDEARVPLSDSSTTNDASRTRQRRKRKWDKPAEQLVAAGVAFPQLLPLGNTMNVPSMSPLLQTLSVPLAVPKVNQPKIQDEVIIAREIVINDAEASLRHRLTKRSTQEDIQRSTGAVVITRGKYRPPNAPPDGEKPLYLHISAAAQLQLKETTERILAVDRAAAMIEEMMKQKSISQIGSVGLQTVKMLSTCVYLGFEADPSSNVAARIRGPNDQYINHIMNETGATVVLRGRGSGSLENQHGDEAQLPLHLLLSGSNPKSIDDAKRLAENLMDTISVEFGASRVSSSKVYGAVPPPQQLISGAPGSDQENQNLISTYGLMTSIPITAPPYAVSSFPVTPATSLYPQFPVMQSLGISNGGPSQPVAGGTSYSGYAGIYPQATPLQQVAQVLKQSISPVISTVPPTMLTATSLSIPSDNASNEMERRPPRKRKFQELPADCKVPEKDKQQSELAMTGDVTPSANRVRSPPSPRSVMPPPPPKTIAPPPSKTMSPPSSKSMLPPPPRSKTMSPLSSKSMLPPPPRFTLTTQRSRLQDNHISVKKPNPVPDTLIKLMEYGDDEDDDDDPDEPLTTRS.

Residues 1–34 (MTEDNDEARVPLSDSSTTNDASRTRQRRKRKWDK) form a disordered region. Positions 206-273 (SSNVAARIRG…KSIDDAKRLA (68 aa)) constitute a KH domain. The span at 413-425 (ATSLSIPSDNASN) shows a compositional bias: polar residues. Positions 413–578 (ATSLSIPSDN…DPDEPLTTRS (166 aa)) are disordered. A compositionally biased stretch (pro residues) spans 472–492 (PPSPRSVMPPPPPKTIAPPPS). Composition is skewed to low complexity over residues 493–503 (KTMSPPSSKSM) and 510–521 (SKTMSPLSSKSM). Positions 560–572 (YGDDEDDDDDPDE) are enriched in acidic residues.

Interacts with AS1. In terms of tissue distribution, expressed in vegetative tissues.

The protein localises to the nucleus. This Arabidopsis thaliana (Mouse-ear cress) protein is Protein RIK (RIK).